Consider the following 714-residue polypeptide: MFEIHREELDWAGRKLTLETGRIARQADGAVLATYGETTVLATVVSARTPKPGIDFFPLTVNYQEKAFAAGRIPGGYFKREGRPSEKETLVSRLIDRPIRPLFPEGYRNDTQVVVTVLSHDLENDPDILALVATSAALTISGIPFMGPVGGARVGYINGALKLNPTVDELKESALDLVVAGTGDAVLMVESEAKELSETLMLEAVMTGHRGFQPVIDAIIRLAEKAAKEPRELAVADKAEVEAAVRDIAEGELREAYKITAKQERYKAVDAVKAKVALALFPEDAEPRFSKEKVAEAFHDLQAKVVRWNILDLGVRIDGRDLKTVRPILAEVGILPRAHGSALFTRGETQALVVATLGTGEDEQFVDSLEGTYKERFLLHYNFPPYSVGETGRMGSPGRREIGHGKLAWRAVRPMLPTAAEFPYTIRIVSEITESNGSSSMATVCGSSLALMDAGVPLKRPTAGIAMGLILEGERFAVLSDILGDEDHLGDMDFKVAGTEEGVTSLQMDIKVAGITEEIMKVALDQAKGGRLHILGEMSKALTGARAELGEFAPRIETLKIPTDKIREVIGTGGKVIREIVEKTGAKINIEDDGTVKVASSDGNSIKAAIAWIKSIANDPEVGQIYEGTVVKVVDFGAFVNFFGSKDGLVHISQLAKGRVAKSSDVVKEGEKVKVKLLGFDDRGKVRLSMRYVDQETGEDLEAKEKAEQQASVD.

Residues aspartate 487 and aspartate 493 each contribute to the Mg(2+) site. Residues 554–613 enclose the KH domain; the sequence is PRIETLKIPTDKIREVIGTGGKVIREIVEKTGAKINIEDDGTVKVASSDGNSIKAAIAWI. Residues 623–691 enclose the S1 motif domain; that stretch reads GQIYEGTVVK…DRGKVRLSMR (69 aa).

This sequence belongs to the polyribonucleotide nucleotidyltransferase family. Requires Mg(2+) as cofactor.

Its subcellular location is the cytoplasm. It catalyses the reaction RNA(n+1) + phosphate = RNA(n) + a ribonucleoside 5'-diphosphate. Involved in mRNA degradation. Catalyzes the phosphorolysis of single-stranded polyribonucleotides processively in the 3'- to 5'-direction. The polypeptide is Polyribonucleotide nucleotidyltransferase (Methylocella silvestris (strain DSM 15510 / CIP 108128 / LMG 27833 / NCIMB 13906 / BL2)).